We begin with the raw amino-acid sequence, 280 residues long: 4-deoxy-L-threo-5-hexosulose-uronate ketol-isomerase (280 aa).

Residues His-198, His-200, Glu-205, and His-247 each contribute to the Zn(2+) site.

The protein belongs to the KduI family. Zn(2+) is required as a cofactor.

The catalysed reaction is 5-dehydro-4-deoxy-D-glucuronate = 3-deoxy-D-glycero-2,5-hexodiulosonate. It functions in the pathway glycan metabolism; pectin degradation; 2-dehydro-3-deoxy-D-gluconate from pectin: step 4/5. Functionally, catalyzes the isomerization of 5-dehydro-4-deoxy-D-glucuronate to 3-deoxy-D-glycero-2,5-hexodiulosonate. This chain is 4-deoxy-L-threo-5-hexosulose-uronate ketol-isomerase, found in Lachnospira eligens (strain ATCC 27750 / DSM 3376 / VPI C15-48 / C15-B4) (Eubacterium eligens).